The sequence spans 129 residues: Small ribosomal subunit protein uS9 (129 aa).

Belongs to the universal ribosomal protein uS9 family.

The polypeptide is Small ribosomal subunit protein uS9 (Nitratiruptor sp. (strain SB155-2)).